Consider the following 200-residue polypeptide: Small ribosomal subunit protein uS4 (200 aa).

Residues 22–43 (TGKELERRPYAPGQHGPTQRKK) form a disordered region. The S4 RNA-binding domain occupies 92-170 (QRLDNIVYRL…VPEYVTFDAE (79 aa)).

The protein belongs to the universal ribosomal protein uS4 family. As to quaternary structure, part of the 30S ribosomal subunit. Contacts protein S5. The interaction surface between S4 and S5 is involved in control of translational fidelity.

Functionally, one of the primary rRNA binding proteins, it binds directly to 16S rRNA where it nucleates assembly of the body of the 30S subunit. Its function is as follows. With S5 and S12 plays an important role in translational accuracy. In Listeria monocytogenes serovar 1/2a (strain ATCC BAA-679 / EGD-e), this protein is Small ribosomal subunit protein uS4.